We begin with the raw amino-acid sequence, 705 residues long: Probable E3 ubiquitin-protein ligase MID2 (705 aa).

The segment at Cys-30–Arg-80 adopts an RING-type zinc-finger fold. Residues Ile-137–Pro-184 form a B box-type 1; degenerate zinc finger. A B box-type 2 zinc finger spans residues Leu-190–Leu-232. Cys-195, His-198, Cys-218, and His-224 together coordinate Zn(2+). A coiled-coil region spans residues Asn-233–Ala-301. The COS domain occupies Leu-340–Leu-399. Positions Pro-404–Gln-504 constitute a Fibronectin type-III domain. Positions Ile-486–Phe-679 constitute a B30.2/SPRY domain.

This sequence belongs to the TRIM/RBCC family. As to quaternary structure, homodimer or heterodimer with MID1. Interacts with IGBP1. In terms of processing, phosphorylated on serine and threonine residues. As to expression, low abundance in brain and lung, with even lower levels in heart, liver, and kidney.

It localises to the cytoplasm. Its subcellular location is the cytoskeleton. It carries out the reaction S-ubiquitinyl-[E2 ubiquitin-conjugating enzyme]-L-cysteine + [acceptor protein]-L-lysine = [E2 ubiquitin-conjugating enzyme]-L-cysteine + N(6)-ubiquitinyl-[acceptor protein]-L-lysine.. Its pathway is protein modification; protein ubiquitination. Functionally, E3 ubiquitin ligase that plays a role in microtubule stabilization. Mediates the 'Lys-48'-linked polyubiquitination of LRRK2 to drive its localization to microtubules and its proteasomal degradation in neurons. This ubiquitination inhibits LRRK2 kinase activation by RAB29. The polypeptide is Probable E3 ubiquitin-protein ligase MID2 (Mid2) (Mus musculus (Mouse)).